The sequence spans 30 residues: V-type proton ATPase catalytic subunit A isoform 1 (30 aa).

This sequence belongs to the ATPase alpha/beta chains family. As to quaternary structure, V-ATPase is a heteromultimeric enzyme composed of a peripheral catalytic V1 complex (main components: subunits A, B, C, D, E, and F) attached to an integral membrane V0 proton pore complex (main component: the proteolipid protein).

It carries out the reaction ATP + H2O + 4 H(+)(in) = ADP + phosphate + 5 H(+)(out). Functionally, catalytic subunit of the peripheral V1 complex of vacuolar ATPase. V-ATPase vacuolar ATPase is responsible for acidifying a variety of intracellular compartments in eukaryotic cells. This chain is V-type proton ATPase catalytic subunit A isoform 1, found in Psilotum nudum (Whisk fern).